The chain runs to 155 residues: Ferredoxin-6, chloroplastic (155 aa).

A chloroplast-targeting transit peptide spans 1–58 (MSTATAPRLPAPRSGASYHYQTTAAPAANTLSFAGHARQAARASGPRLSSRFVASAAA). In terms of domain architecture, 2Fe-2S ferredoxin-type spans 61-152 (HKVKLVGPDG…DCVIHTHKEE (92 aa)). [2Fe-2S] cluster-binding residues include Cys-98, Cys-103, Cys-106, and Cys-136.

This sequence belongs to the 2Fe2S plant-type ferredoxin family. [2Fe-2S] cluster is required as a cofactor.

The protein localises to the plastid. The protein resides in the chloroplast. Its function is as follows. Ferredoxins are iron-sulfur proteins that transfer electrons in a wide variety of metabolic reactions. In Zea mays (Maize), this protein is Ferredoxin-6, chloroplastic (FDX6).